The primary structure comprises 862 residues: Probable disease resistance protein At5g43740 (862 aa).

A coiled-coil region spans residues 24–61; the sequence is RNYIHMMESNLDALQKTMEELKNGRDDLLGRVSIEEDK. The region spanning 135 to 438 is the NB-ARC domain; the sequence is MVAQEIIHKV…CEGFINPNRY (304 aa). 178–185 is a binding site for ATP; sequence GMGGVGKT. LRR repeat units follow at residues 511-532, 533-555, 558-580, and 582-604; these read IVRTMSFTCTQIKKISCRSKCP, NLSTLLILDNRLLVKISNRFFRF, KLVVLDLSANLDLIKLPEEISNL, and SLQYLNISLTGIKSLPVGLKKLR.

Belongs to the disease resistance NB-LRR family.

Its function is as follows. Probable disease resistance protein. The protein is Probable disease resistance protein At5g43740 of Arabidopsis thaliana (Mouse-ear cress).